The sequence spans 576 residues: Flagellin B (576 aa).

The protein belongs to the bacterial flagellin family. Heteromer of FlaA and FlaB. Interacts with FliW. Interacts with FliS.

The protein localises to the secreted. It localises to the bacterial flagellum. Its function is as follows. Flagellin is the subunit protein which polymerizes to form the filaments of bacterial flagella. The chain is Flagellin B (flaB) from Campylobacter jejuni subsp. jejuni serotype O:6 (strain 81116 / NCTC 11828).